A 126-amino-acid chain; its full sequence is Thioredoxin-like 3-3 (126 aa).

Residues 1 to 24 (MRKQESEGANLEFESKSNDNGNVK) are disordered. A Thioredoxin domain is found at 5 to 126 (ESEGANLEFE…RLHDRLWLHS (122 aa)). Catalysis depends on nucleophile residues Cys-55 and Cys-58. Cys-55 and Cys-58 are joined by a disulfide.

The protein belongs to the thioredoxin family.

Its function is as follows. Probable thiol-disulfide oxidoreductase that may participate in various redox reactions. The protein is Thioredoxin-like 3-3 of Arabidopsis thaliana (Mouse-ear cress).